The following is a 365-amino-acid chain: Aminomethyltransferase (365 aa).

It belongs to the GcvT family. In terms of assembly, the glycine cleavage system is composed of four proteins: P, T, L and H.

The enzyme catalyses N(6)-[(R)-S(8)-aminomethyldihydrolipoyl]-L-lysyl-[protein] + (6S)-5,6,7,8-tetrahydrofolate = N(6)-[(R)-dihydrolipoyl]-L-lysyl-[protein] + (6R)-5,10-methylene-5,6,7,8-tetrahydrofolate + NH4(+). In terms of biological role, the glycine cleavage system catalyzes the degradation of glycine. The sequence is that of Aminomethyltransferase from Synechococcus sp. (strain CC9902).